The chain runs to 799 residues: Phenylalanine--tRNA ligase beta subunit (799 aa).

The 108-residue stretch at 40-147 (KSHLSSVITV…KDTTLGISVR (108 aa)) folds into the tRNA-binding domain. The B5 domain maps to 402-479 (SKTVTIETNL…RTIGYASIRT (78 aa)). 4 residues coordinate Mg(2+): Asp-457, Asp-463, Glu-466, and Glu-467. The 93-residue stretch at 707–799 (SHFPQGQLDL…TAKSNGYSLR (93 aa)) folds into the FDX-ACB domain.

Belongs to the phenylalanyl-tRNA synthetase beta subunit family. Type 1 subfamily. Tetramer of two alpha and two beta subunits. Requires Mg(2+) as cofactor.

The protein localises to the cytoplasm. The catalysed reaction is tRNA(Phe) + L-phenylalanine + ATP = L-phenylalanyl-tRNA(Phe) + AMP + diphosphate + H(+). The chain is Phenylalanine--tRNA ligase beta subunit from Leptospira biflexa serovar Patoc (strain Patoc 1 / Ames).